The sequence spans 237 residues: Bax inhibitor 1 (237 aa).

At 1–29 (MNIFDRKINFDALLKFSHITPSTQQHLKK) the chain is on the cytoplasmic side. A Glycyl lysine isopeptide (Lys-Gly) (interchain with G-Cter in ubiquitin) cross-link involves residue Lys-7. Residues 30 to 50 (VYASFALCMFVAAAGAYVHVV) traverse the membrane as a helical segment. Topologically, residues 51–52 (TR) are lumenal. The helical transmembrane segment at 53–73 (FIQAGLLSALGALALMICLMA) threads the bilayer. Topologically, residues 74 to 86 (TPHSHETEQKRLG) are cytoplasmic. Residues 87–107 (LLAGFAFLTGVGLGPALELCI) traverse the membrane as a helical segment. Residues 108 to 112 (AINPS) are Lumenal-facing. A helical membrane pass occupies residues 113–133 (ILPTAFMGTAMIFTCFSLSAL). At 134 to 139 (YARRRS) the chain is on the cytoplasmic side. A helical transmembrane segment spans residues 140-160 (YLFLGGILMSAMSLMFVSSLG). Residues 161–166 (NLFFGS) lie on the Lumenal side of the membrane. The helical transmembrane segment at 167 to 187 (IWLFQANLYMGLLVMCGFVLF) threads the bilayer. Residues 188–206 (DTQLIIEKAEHGDKDYIWH) lie on the Cytoplasmic side of the membrane. Residues 207–227 (CIDLFLDFVTLFRKLMLILAF) constitute an intramembrane region (helical). At 228 to 237 (NEKDKKKEKK) the chain is on the cytoplasmic side.

It belongs to the BI1 family. Interacts with BCL2 and BCL2L1. Interacts with ERN1. Post-translationally, ubiquitinated by BFAR, leading to proteasomal degradation. In terms of tissue distribution, highly abundant in adult testis.

It is found in the endoplasmic reticulum membrane. Its function is as follows. Endoplasmic reticulum (ER)-resident protein that confers cellular protection as an anti-apoptotic protein by limiting multiple stress-inducing pathways surrounding the endoplasmic reticulum and mitochondria. Inhibits the activities of the key sensor for the endoplasmic reticulum unfolded protein response IRE1alpha/ERN1 both directly and by blocking BAX/BAK binding. Modulates ER calcium homeostasis by acting as a calcium-leak channel. Negatively regulates autophagy and autophagosome formation, especially during periods of nutrient deprivation, and reduces cell survival during starvation. The polypeptide is Bax inhibitor 1 (Tmbim6) (Rattus norvegicus (Rat)).